The following is a 212-amino-acid chain: Large ribosomal subunit protein uL3 (212 aa).

The interval 136–155 is disordered; the sequence is THGNSVSHRVLGSTGQNQTP. N5-methylglutamine is present on Gln-153.

The protein belongs to the universal ribosomal protein uL3 family. As to quaternary structure, part of the 50S ribosomal subunit. Forms a cluster with proteins L14 and L19. In terms of processing, methylated by PrmB.

One of the primary rRNA binding proteins, it binds directly near the 3'-end of the 23S rRNA, where it nucleates assembly of the 50S subunit. This chain is Large ribosomal subunit protein uL3, found in Acinetobacter baumannii (strain AB307-0294).